Here is a 272-residue protein sequence, read N- to C-terminus: Ribosomal RNA small subunit methyltransferase A (272 aa).

Positions 16, 18, 43, 64, 89, and 110 each coordinate S-adenosyl-L-methionine.

This sequence belongs to the class I-like SAM-binding methyltransferase superfamily. rRNA adenine N(6)-methyltransferase family. RsmA subfamily.

Its subcellular location is the cytoplasm. It carries out the reaction adenosine(1518)/adenosine(1519) in 16S rRNA + 4 S-adenosyl-L-methionine = N(6)-dimethyladenosine(1518)/N(6)-dimethyladenosine(1519) in 16S rRNA + 4 S-adenosyl-L-homocysteine + 4 H(+). Specifically dimethylates two adjacent adenosines (A1518 and A1519) in the loop of a conserved hairpin near the 3'-end of 16S rRNA in the 30S particle. May play a critical role in biogenesis of 30S subunits. This Pseudomonas fluorescens (strain Pf0-1) protein is Ribosomal RNA small subunit methyltransferase A.